The primary structure comprises 285 residues: Transcription factor LBX1 (285 aa).

Positions 1-20 (MTSKEDGKAAPGEERRRSPL) are enriched in basic and acidic residues. A disordered region spans residues 1–36 (MTSKEDGKAAPGEERRRSPLDHLPPPANSNKPLTPF). Residues 125-184 (RRKSRTAFTNHQIYELEKRFLYQKYLSPADRDQIAQQLGLTNAQVITWFQNRRAKLKRDL) constitute a DNA-binding region (homeobox). The disordered stretch occupies residues 212-285 (EQNSEASGGG…EEDEEIDVDD (74 aa)). The span at 218 to 230 (SGGGGGGGGGGCG) shows a compositional bias: gly residues. Acidic residues predominate over residues 272 to 285 (CSEDEEDEEIDVDD).

In terms of assembly, interacts with SKOR1 which acts as a transcriptional corepressor.

It localises to the nucleus. In terms of biological role, transcription factor required for the development of GABAergic interneurons in the dorsal horn of the spinal cord and migration and further development of hypaxial muscle precursor cells for limb muscles, diaphragm and hypoglossal cord. This chain is Transcription factor LBX1, found in Rattus norvegicus (Rat).